Reading from the N-terminus, the 252-residue chain is Pantothenate synthetase (252 aa).

29–36 (MGNLHAGH) is a binding site for ATP. H36 serves as the catalytic Proton donor. (R)-pantoate is bound at residue Q60. Residue Q60 coordinates beta-alanine. Position 146 to 149 (146 to 149 (GEKD)) interacts with ATP. A (R)-pantoate-binding site is contributed by Q152. ATP contacts are provided by residues V175 and 183–186 (CSSR).

Belongs to the pantothenate synthetase family. In terms of assembly, homodimer.

Its subcellular location is the cytoplasm. The enzyme catalyses (R)-pantoate + beta-alanine + ATP = (R)-pantothenate + AMP + diphosphate + H(+). The protein operates within cofactor biosynthesis; (R)-pantothenate biosynthesis; (R)-pantothenate from (R)-pantoate and beta-alanine: step 1/1. In terms of biological role, catalyzes the condensation of pantoate with beta-alanine in an ATP-dependent reaction via a pantoyl-adenylate intermediate. This chain is Pantothenate synthetase, found in Legionella pneumophila (strain Lens).